The sequence spans 200 residues: N-(5'-phosphoribosyl)anthranilate isomerase (200 aa).

The protein belongs to the TrpF family.

The catalysed reaction is N-(5-phospho-beta-D-ribosyl)anthranilate = 1-(2-carboxyphenylamino)-1-deoxy-D-ribulose 5-phosphate. The protein operates within amino-acid biosynthesis; L-tryptophan biosynthesis; L-tryptophan from chorismate: step 3/5. The sequence is that of N-(5'-phosphoribosyl)anthranilate isomerase from Endomicrobium trichonymphae.